Reading from the N-terminus, the 452-residue chain is Protein phosphatase 1F (452 aa).

The PPM-type phosphatase domain maps to 153-410; the sequence is LVSIHAIRNT…DNITVMVVFL (258 aa). Residues Asp195, Gly196, Asp357, and Asp401 each contribute to the Mn(2+) site. Ser452 carries the post-translational modification Phosphoserine.

Belongs to the PP2C family. In terms of assembly, associates with FEM1B. Mg(2+) serves as cofactor. The cofactor is Mn(2+). In terms of tissue distribution, expressed in the liver.

It catalyses the reaction O-phospho-L-seryl-[protein] + H2O = L-seryl-[protein] + phosphate. The enzyme catalyses O-phospho-L-threonyl-[protein] + H2O = L-threonyl-[protein] + phosphate. In terms of biological role, dephosphorylates and concomitantly deactivates CaM-kinase II activated upon autophosphorylation, and CaM-kinases IV and I activated upon phosphorylation by CaM-kinase kinase. Promotes apoptosis. The sequence is that of Protein phosphatase 1F (Ppm1f) from Mus musculus (Mouse).